A 1627-amino-acid polypeptide reads, in one-letter code: Pleckstrin homology domain-containing family G member 4B (1627 aa).

Disordered stretches follow at residues 211 to 349, 381 to 475, 501 to 537, 959 to 1008, 1049 to 1111, and 1124 to 1159; these read YSSC…VQPR, LTGA…GQAV, VSTD…GTGD, SEAA…PAQP, TTAH…SKGL, and PLWQ…QVGS. A compositionally biased stretch (polar residues) spans 241–251; sequence GSASCPDTLTS. Basic and acidic residues-rich tracts occupy residues 262 to 273 and 310 to 322; these read QLRHLPYPERAE and ERPD…DRPK. Gly residues predominate over residues 465–474; the sequence is RPGGHLGGQA. Over residues 975-985 the composition is skewed to basic and acidic residues; it reads PKHERAQEAMR. Polar residues predominate over residues 1057–1068; sequence SACSSEPTQTLA. The span at 1070–1081 shows a compositional bias: basic residues; the sequence is RPRKHPQKKMIK. Composition is skewed to polar residues over residues 1101 to 1111 and 1133 to 1144; these read PDHTSVFSKGL and PVTQSRSLSSPS. A DH domain is found at 1161–1340; sequence RLRHIMAEMI…CFQLRHGNDL (180 aa). One can recognise a PH domain in the interval 1352 to 1460; sequence NLKEQGQLRC…WTDVIGRILW (109 aa). Residues 1519 to 1558 are disordered; that stretch reads KGTESQMRGSTAVSSSDHAAPFKRPHSTISDSSTSSSSSQ. The span at 1521 to 1535 shows a compositional bias: polar residues; sequence TESQMRGSTAVSSSD. The span at 1545-1558 shows a compositional bias: low complexity; sequence STISDSSTSSSSSQ.

As to quaternary structure, found in a complex with ARHGEF11 and ARHGEF12; binding to ARHGEF11 and ARHGEF12 enhances CDC42 GEF activity of PLEKHG4B, and PLEKHG4B, in turn, inhibits ARHGEF11- and ARHGEF12-mediated RHOA activation. Interacts with ANXA2; this interaction is required for PLEKHG4B localization to cell-cell adhesions.

The protein resides in the basal cell membrane. It is found in the cell junction. Its subcellular location is the nucleus. It localises to the cytoplasm. Functionally, guanine nucleotide exchange factor (GEF) which specifically activates small GTPase CDC42 by exchanging bound GDP for free GTP. Plays a role in actin cytoskeletal remodeling in the late stage of cell-cell junction formation by regulating the contractility of actin filaments, which prompts the conversion from 'open' to 'closed' junctions. This chain is Pleckstrin homology domain-containing family G member 4B, found in Homo sapiens (Human).